Reading from the N-terminus, the 36-residue chain is Photosystem I reaction center subunit VIII (36 aa).

The helical transmembrane segment at 9 to 29 (ILVPLVGLVFPAVTMASLFLY) threads the bilayer.

The protein belongs to the PsaI family.

The protein localises to the plastid. Its subcellular location is the chloroplast thylakoid membrane. In terms of biological role, may help in the organization of the PsaL subunit. The chain is Photosystem I reaction center subunit VIII from Staurastrum punctulatum (Green alga).